Reading from the N-terminus, the 402-residue chain is MIAYFLLLLTCLPVLQARVEVHQEFISSKRVSVRFEIVTESHSPNRPVTFDLFPRGPKTNIILLDTFNPVFNFSIQLVQPFTGQPLGDRIYRKVQFSGTNQPWINDTFTTTSGISLSVATEVTCARNYFGNRCENFCDAHLAKAARKRCDAMGRLRCDIGWMGPHCGQAVDPRKCSCENDGICVSSMIHPSQPNQTSSNEQLICECTNGFTGTRCEIFGFNQFQLTAPRPDACSVKDACLNGAKCFPNGPKVFCSCAVGFIGEFCEISLTTTTPTTVEITVSTSGYSSAVYITVALFVIFSIIIGCFKYKFKPMRQQALARGQVPEPYKMPETKSMLIDPEASEAQKKVFTIEGSVQKIDEEVRYTSAPRKYESNNEYAVIQKSTPPPPSLSPPSIPACHYV.

Positions 1–15 are cleaved as a signal peptide; sequence MIAYFLLLLTCLPVL. Residues 16–279 are Extracellular-facing; the sequence is QARVEVHQEF…TTTTPTTVEI (264 aa). 2 N-linked (GlcNAc...) asparagine glycosylation sites follow: asparagine 72 and asparagine 105. Positions 122–166 constitute a DSL domain; the sequence is VTCARNYFGNRCENFCDAHLAKAARKRCDAMGRLRCDIGWMGPHC. 9 disulfide bridges follow: cysteine 124–cysteine 133, cysteine 137–cysteine 149, cysteine 157–cysteine 166, cysteine 175–cysteine 183, cysteine 177–cysteine 204, cysteine 206–cysteine 215, cysteine 233–cysteine 245, cysteine 239–cysteine 254, and cysteine 256–cysteine 265. 2 EGF-like domains span residues 171-216 and 229-266; these read DPRK…TRCE and RPDA…EFCE. N-linked (GlcNAc...) asparagine glycosylation is present at asparagine 194. Residues 280–306 traverse the membrane as a helical segment; sequence TVSTSGYSSAVYITVALFVIFSIIIGC. The Cytoplasmic segment spans residues 307–402; the sequence is FKYKFKPMRQ…PPSIPACHYV (96 aa).

May interact with lin-12 / Notch receptor. As to expression, expressed in the gonad distal tip cell (DTC) of hermaphrodites.

It is found in the cell membrane. In terms of biological role, probable ligand for lin-12/Notch and glp-1/Notch receptors and involved in the mediation of Notch signaling. Involved in the lin-12/Notch pathway signaling of cell fate in vulval precursor cells (VPCs) and in the postembryonic mesodermal lineage (M lineage), acting redundantly with dsl-1 and apx-1. Functions in uterine cells to promote basement membrane mobility during tissue remodeling. Required for oocyte growth control, acting redundantly with apx-1, perhaps signaling via the glp-1/Notch pathway. Plays a role in Notch-dependent induction of left-right asymmetry in interneurons and motoneurons. Involved in maintaining the developmentally arrested larval state known as dauer, probably signaling in the glp-1/Notch pathway. Required for normal sleep bout quantity and arousal thresholds during the transition from the last larval stage to adulthood in well-fed animals. The chain is Protein lag-2 from Caenorhabditis elegans.